The sequence spans 158 residues: Transcription elongation factor GreA (158 aa).

A coiled-coil region spans residues 46-66; it reads AEYEAAKERQGFIEGRISELE.

It belongs to the GreA/GreB family.

In terms of biological role, necessary for efficient RNA polymerase transcription elongation past template-encoded arresting sites. The arresting sites in DNA have the property of trapping a certain fraction of elongating RNA polymerases that pass through, resulting in locked ternary complexes. Cleavage of the nascent transcript by cleavage factors such as GreA or GreB allows the resumption of elongation from the new 3'terminus. GreA releases sequences of 2 to 3 nucleotides. This Neisseria meningitidis serogroup B (strain ATCC BAA-335 / MC58) protein is Transcription elongation factor GreA.